A 283-amino-acid chain; its full sequence is Glutamate racemase (283 aa).

Residues 28-29 (DS) and 60-61 (YG) contribute to the substrate site. C92 functions as the Proton donor/acceptor in the catalytic mechanism. 93–94 (NT) provides a ligand contact to substrate. C204 serves as the catalytic Proton donor/acceptor. Position 205–206 (205–206 (TH)) interacts with substrate.

The protein belongs to the aspartate/glutamate racemases family.

The enzyme catalyses L-glutamate = D-glutamate. It functions in the pathway cell wall biogenesis; peptidoglycan biosynthesis. Its function is as follows. Provides the (R)-glutamate required for cell wall biosynthesis. The sequence is that of Glutamate racemase from Salmonella gallinarum (strain 287/91 / NCTC 13346).